The primary structure comprises 201 residues: Large ribosomal subunit protein uL4 (201 aa).

The segment at 44–68 (RAQKSRADVSGSGRKPWRQKGTGRA) is disordered.

It belongs to the universal ribosomal protein uL4 family. As to quaternary structure, part of the 50S ribosomal subunit.

One of the primary rRNA binding proteins, this protein initially binds near the 5'-end of the 23S rRNA. It is important during the early stages of 50S assembly. It makes multiple contacts with different domains of the 23S rRNA in the assembled 50S subunit and ribosome. Its function is as follows. Forms part of the polypeptide exit tunnel. The sequence is that of Large ribosomal subunit protein uL4 from Buchnera aphidicola subsp. Schizaphis graminum (strain Sg).